The chain runs to 401 residues: Argininosuccinate synthase (401 aa).

Alanine 8–serine 16 contributes to the ATP binding site. Tyrosine 85 is a binding site for L-citrulline. Glycine 115 contacts ATP. Positions 117, 121, and 122 each coordinate L-aspartate. Asparagine 121 provides a ligand contact to L-citrulline. L-citrulline contacts are provided by arginine 125, serine 173, glutamate 258, and tyrosine 270.

Belongs to the argininosuccinate synthase family. Type 1 subfamily. In terms of assembly, homotetramer.

It localises to the cytoplasm. It catalyses the reaction L-citrulline + L-aspartate + ATP = 2-(N(omega)-L-arginino)succinate + AMP + diphosphate + H(+). Its pathway is amino-acid biosynthesis; L-arginine biosynthesis; L-arginine from L-ornithine and carbamoyl phosphate: step 2/3. The protein is Argininosuccinate synthase of Staphylococcus aureus (strain MRSA252).